Here is a 378-residue protein sequence, read N- to C-terminus: Histidine decarboxylase (378 aa).

Position 120 (histidine 120) interacts with substrate. N6-(pyridoxal phosphate)lysine is present on lysine 233.

Belongs to the group II decarboxylase family. As to quaternary structure, homotetramer. It depends on pyridoxal 5'-phosphate as a cofactor.

The enzyme catalyses L-histidine + H(+) = histamine + CO2. This is Histidine decarboxylase (hdc) from Klebsiella aerogenes (Enterobacter aerogenes).